We begin with the raw amino-acid sequence, 287 residues long: Bifunctional protein FolD (287 aa).

Residues 166-168 (GAS), Ser191, and Ile232 each bind NADP(+).

It belongs to the tetrahydrofolate dehydrogenase/cyclohydrolase family. As to quaternary structure, homodimer.

The enzyme catalyses (6R)-5,10-methylene-5,6,7,8-tetrahydrofolate + NADP(+) = (6R)-5,10-methenyltetrahydrofolate + NADPH. The catalysed reaction is (6R)-5,10-methenyltetrahydrofolate + H2O = (6R)-10-formyltetrahydrofolate + H(+). It functions in the pathway one-carbon metabolism; tetrahydrofolate interconversion. Catalyzes the oxidation of 5,10-methylenetetrahydrofolate to 5,10-methenyltetrahydrofolate and then the hydrolysis of 5,10-methenyltetrahydrofolate to 10-formyltetrahydrofolate. In Haemophilus ducreyi (strain 35000HP / ATCC 700724), this protein is Bifunctional protein FolD.